Reading from the N-terminus, the 2273-residue chain is Acetyl-CoA carboxylase, mitochondrial (2273 aa).

The N-terminal 104 residues, lysine 1–leucine 104, are a transit peptide targeting the mitochondrion. Residues valine 134 to leucine 635 enclose the Biotin carboxylation domain. One can recognise an ATP-grasp domain in the interval lysine 292 to methionine 484. Position 332–337 (glycine 332–glycine 337) interacts with ATP. Residue arginine 459 is part of the active site. Residues leucine 763–threonine 837 enclose the Biotinyl-binding domain. Lysine 804 carries the N6-biotinyllysine modification. A CoA carboxyltransferase N-terminal domain is found at proline 1532–glutamate 1867. The interval proline 1532–lysine 2187 is carboxyltransferase. Residues arginine 1776, lysine 2080, and arginine 2082 each contribute to the CoA site. The 317-residue stretch at arginine 1871–lysine 2187 folds into the CoA carboxyltransferase C-terminal domain.

Requires biotin as cofactor.

It is found in the mitochondrion. The enzyme catalyses hydrogencarbonate + acetyl-CoA + ATP = malonyl-CoA + ADP + phosphate + H(+). The catalysed reaction is N(6)-biotinyl-L-lysyl-[protein] + hydrogencarbonate + ATP = N(6)-carboxybiotinyl-L-lysyl-[protein] + ADP + phosphate + H(+). It participates in lipid metabolism; malonyl-CoA biosynthesis; malonyl-CoA from acetyl-CoA: step 1/1. Functionally, catalyzes the rate-limiting reaction in the mitochondrial fatty acid synthesis (FAS) type II pathway. Responsible for the production of the mitochondrial malonyl-CoA, used for the biosynthesis of the cofactor lipoic acid. This protein carries three functions: biotin carboxyl carrier protein, biotin carboxylase, and carboxyltransferase. In Saccharomyces cerevisiae (strain JAY291) (Baker's yeast), this protein is Acetyl-CoA carboxylase, mitochondrial (HFA1).